Reading from the N-terminus, the 385-residue chain is Meiotic recombination protein SPO11-2 (385 aa).

Residues 24-169 form the Topo IIA-type catalytic domain; sequence LPPAEVRARI…LGIMASSRGA (146 aa). Catalysis depends on Y126, which acts as the O-(5'-phospho-DNA)-tyrosine intermediate. E219 and D272 together coordinate Mg(2+).

This sequence belongs to the TOP6A family. Interacts with TOP6B. Mg(2+) serves as cofactor.

It localises to the nucleus. The enzyme catalyses ATP-dependent breakage, passage and rejoining of double-stranded DNA.. Its function is as follows. Required for meiotic recombination. Mediates DNA cleavage that forms the double-strand breaks (DSB) that initiate meiotic recombination. This is Meiotic recombination protein SPO11-2 (SPO11-2) from Oryza sativa subsp. japonica (Rice).